The following is a 296-amino-acid chain: Phosphatidylglycerol--prolipoprotein diacylglyceryl transferase (296 aa).

Helical transmembrane passes span leucine 17 to glycine 37, methionine 59 to tyrosine 79, and glycine 97 to tryptophan 117. Arginine 142 serves as a coordination point for a 1,2-diacyl-sn-glycero-3-phospho-(1'-sn-glycerol). 2 consecutive transmembrane segments (helical) span residues methionine 230–phenylalanine 250 and phenylalanine 257–leucine 277.

This sequence belongs to the Lgt family.

The protein resides in the cell inner membrane. It carries out the reaction L-cysteinyl-[prolipoprotein] + a 1,2-diacyl-sn-glycero-3-phospho-(1'-sn-glycerol) = an S-1,2-diacyl-sn-glyceryl-L-cysteinyl-[prolipoprotein] + sn-glycerol 1-phosphate + H(+). The protein operates within protein modification; lipoprotein biosynthesis (diacylglyceryl transfer). In terms of biological role, catalyzes the transfer of the diacylglyceryl group from phosphatidylglycerol to the sulfhydryl group of the N-terminal cysteine of a prolipoprotein, the first step in the formation of mature lipoproteins. The sequence is that of Phosphatidylglycerol--prolipoprotein diacylglyceryl transferase from Burkholderia lata (strain ATCC 17760 / DSM 23089 / LMG 22485 / NCIMB 9086 / R18194 / 383).